A 606-amino-acid chain; its full sequence is Mitogen-activated protein kinase kinase kinase 7 (606 aa).

The segment at 1-300 is interaction with MAPK8IP1; that stretch reads MSTASAASSS…FPGADEPLQY (300 aa). A Protein kinase domain is found at 36–291; it reads IEVEEVVGRG…KIMTHLMRYF (256 aa). ATP is bound by residues 42–50 and K63; that span reads VGRGAFGVV. K72 is covalently cross-linked (Glycyl lysine isopeptide (Lys-Gly) (interchain with G-Cter in ubiquitin)). The active-site Proton acceptor is D156. A Glycyl lysine isopeptide (Lys-Gly) (interchain with G-Cter in ubiquitin) cross-link involves residue K158. 2 positions are modified to phosphothreonine; by autocatalysis: T184 and T187. At S192 the chain carries Phosphoserine; by autocatalysis. K209 is covalently cross-linked (Glycyl lysine isopeptide (Lys-Gly) (interchain with G-Cter in ubiquitin)). Disordered regions lie at residues 301-338 and 354-391; these read PCQY…MEQV and KNQA…MSAD. Positions 306–338 are enriched in polar residues; the sequence is DEGQSNSATSTGSFMDIASTNTSNKSDTNMEQV. Low complexity predominate over residues 361 to 375; sequence SESGRLSLGASRGSS. Phosphoserine occurs at positions 367, 389, and 439. The segment covering 443–452 has biased composition (polar residues); it reads LTVTGTEPGQ. The disordered stretch occupies residues 443-493; that stretch reads LTVTGTEPGQVSSRSSSPSVRMITTSGPTSEKPTRSHPWTPDDSTDTNGSD. Residues 453-463 are compositionally biased toward low complexity; the sequence is VSSRSSSPSVR. S455 is modified (phosphoserine). Residues 464-473 are compositionally biased toward polar residues; sequence MITTSGPTSE.

This sequence belongs to the protein kinase superfamily. STE Ser/Thr protein kinase family. MAP kinase kinase kinase subfamily. Can form homodimer. Binds both upstream activators and downstream substrates in multimolecular complexes. Interacts with TAB1/MAP3K7IP1, TAB2/MAP3K7IP2 and TAB3/MAP3K7IP3. Identified in the TRIKA2 complex composed of MAP3K7/TAK1, TAB1/MAP3K7IP1 and TAB2/MAP3K7IP2. Interacts with PPM1L and PPM1B/PP2CB. Interaction with PP2A and PPP6C leads to its repressed activity. Interacts with TRAF6 and TAB1/MAP3K7IP1; during IL-1 signaling. Interacts with TAOK1 and TAOK2; interaction with TAOK2 interferes with MAP3K7 interaction with IKKA, thus preventing NF-kappa-B activation. Interacts with DYNC2I2 (via WD domains). Interacts with CYLD and RBCK1. Interacts with TGFBR1; induces MAP3K7/TAK1 activation by TRAF6. Interacts with MAPK8IP1 and SMAD6. Interacts with isoform 1 of VRK2. Interacts with DAB2; the interaction is induced by TGF-beta stimulation and may mediate TGF-beta stimulated JNK activation. Interacts with TRIM5. Part of a complex containing ITCH, NDFIP1 and MAP3K7. Interacts with IFIT5; the interaction synergizes the recruitment of IKK to MAP3K7 and enhances IKK phosphorylation. Interacts with PLEKHM1 (via N- and C-terminus). Found in a complex with SH3RF1, RAC2, MAP2K7/MKK7, MAPK8IP1/JIP1, MAPK8/JNK1 and MAPK9/JNK2. Interacts with SASH1. Interacts with RIPK1. Requires Mg(2+) as cofactor. Post-translationally, association with TAB1/MAP3K7IP1 promotes autophosphorylation at Ser-192 and subsequent activation. Association with TAB2/MAP3K7IP2, itself associated with free unanchored Lys-63 polyubiquitin chain, promotes autophosphorylation and subsequent activation of MAP3K7. Dephosphorylation at Ser-192 by PPM1B/PP2CB and at Thr-187 by PP2A and PPP6C leads to inactivation. In terms of processing, 'Lys-48'-linked polyubiquitination at Lys-72 is induced by TNFalpha, and leads to proteasomal degradation. Undergoes 'Lys-48'-linked polyubiquitination catalyzed by ITCH. 'Lys-63'-linked polyubiquitination at Lys-158 by TRIM8 does not lead to proteasomal degradation but contributes to autophosphorylation and activation. Deubiquitinated by CYLD, a protease that selectively cleaves 'Lys-63'-linked ubiquitin chains. Deubiquitinated by USP19; leading to negative regulation of TNF-alpha- and IL-1beta-triggered NF-kappa-B activation.

It localises to the cytoplasm. The protein localises to the cell membrane. The enzyme catalyses L-seryl-[protein] + ATP = O-phospho-L-seryl-[protein] + ADP + H(+). The catalysed reaction is L-threonyl-[protein] + ATP = O-phospho-L-threonyl-[protein] + ADP + H(+). With respect to regulation, activated by pro-inflammatory cytokines and in response to physical and chemical stresses, including osmotic stress, oxidative stress, arsenic and ultraviolet light irradiation. Activated by 'Lys-63'-linked polyubiquitination and by autophosphorylation. Association with TAB1/MAP3K7IP1 and TAB2/MAP3K7IP2 promotes activation through autophosphorylation, whereas PPM1B/PP2CB, PP2A and PPP6C dephosphorylation leads to inactivation. Ceramides are also able to activate MAP3K7/TAK1. Its function is as follows. Serine/threonine kinase which acts as an essential component of the MAP kinase signal transduction pathway. Plays an important role in the cascades of cellular responses evoked by changes in the environment. Mediates signal transduction of TRAF6, various cytokines including interleukin-1 (IL-1), transforming growth factor-beta (TGFB), TGFB-related factors like BMP2 and BMP4, toll-like receptors (TLR), tumor necrosis factor receptor CD40 and B-cell receptor (BCR). Once activated, acts as an upstream activator of the MKK/JNK signal transduction cascade and the p38 MAPK signal transduction cascade through the phosphorylation and activation of several MAP kinase kinases like MAP2K1/MEK1, MAP2K3/MKK3, MAP2K6/MKK6 and MAP2K7/MKK7. These MAP2Ks in turn activate p38 MAPKs and c-jun N-terminal kinases (JNKs); both p38 MAPK and JNK pathways control the transcription factors activator protein-1 (AP-1). Independently of MAP2Ks and p38 MAPKs, acts as a key activator of NF-kappa-B by promoting activation of the I-kappa-B-kinase (IKK) core complex. Mechanistically, recruited to polyubiquitin chains of RIPK2 and IKBKG/NEMO via TAB2/MAP3K7IP2 and TAB3/MAP3K7IP3, and catalyzes phosphorylation and activation of IKBKB/IKKB component of the IKK complex, leading to NF-kappa-B activation. In osmotic stress signaling, plays a major role in the activation of MAPK8/JNK1, but not that of NF-kappa-B. Promotes TRIM5 capsid-specific restriction activity. Phosphorylates RIPK1 at 'Ser-321' which positively regulates RIPK1 interaction with RIPK3 to promote necroptosis but negatively regulates RIPK1 kinase activity and its interaction with FADD to mediate apoptosis. Phosphorylates STING1 in response to cGAMP-activation, promoting association between STEEP1 and STING1 and STING1 translocation to COPII vesicles. This chain is Mitogen-activated protein kinase kinase kinase 7 (MAP3K7), found in Pongo abelii (Sumatran orangutan).